Reading from the N-terminus, the 119-residue chain is Large ribosomal subunit protein uL24 (119 aa).

Belongs to the universal ribosomal protein uL24 family. As to quaternary structure, part of the 50S ribosomal subunit.

In terms of biological role, one of two assembly initiator proteins, it binds directly to the 5'-end of the 23S rRNA, where it nucleates assembly of the 50S subunit. Functionally, one of the proteins that surrounds the polypeptide exit tunnel on the outside of the subunit. The protein is Large ribosomal subunit protein uL24 of Clavibacter sepedonicus (Clavibacter michiganensis subsp. sepedonicus).